Reading from the N-terminus, the 454-residue chain is Protection of telomeres protein 1b (454 aa).

Belongs to the telombin family. In terms of assembly, interacts with TRB1, TRB2 and TRB3. In terms of tissue distribution, expressed at low levels in roots, rosette leaves, cauline leaves, stems and flowers.

It is found in the nucleus. Its subcellular location is the chromosome. The protein resides in the telomere. In terms of biological role, negatively regulates telomerase activity and participates in chromosome end protection. Binds RNA non-specifically. Associates with a regulatory Pol III-dependent lncRNA, which represses telomerase activity in response to DNA damage. Binds single-stranded telomeric DNA with weak affinity. This is Protection of telomeres protein 1b from Arabidopsis thaliana (Mouse-ear cress).